Reading from the N-terminus, the 363-residue chain is Ribosome-binding ATPase YchF (363 aa).

The 255-residue stretch at 3–257 (FKCGFVGLPN…VSAYDHLSLK (255 aa)) folds into the OBG-type G domain. 12–17 (NVGKST) lines the ATP pocket. Mg(2+) is bound by residues S16 and T36. The TGS domain maps to 278–361 (NLITFFTAGK…CDGDIIHVLY (84 aa)).

This sequence belongs to the TRAFAC class OBG-HflX-like GTPase superfamily. OBG GTPase family. YchF/OLA1 subfamily. It depends on Mg(2+) as a cofactor.

Functionally, ATPase that binds to both the 70S ribosome and the 50S ribosomal subunit in a nucleotide-independent manner. The sequence is that of Ribosome-binding ATPase YchF from Buchnera aphidicola subsp. Baizongia pistaciae (strain Bp).